The following is a 53-amino-acid chain: Large ribosomal subunit protein eL40 (53 aa).

It belongs to the eukaryotic ribosomal protein eL40 family.

This chain is Large ribosomal subunit protein eL40, found in Pyrobaculum calidifontis (strain DSM 21063 / JCM 11548 / VA1).